We begin with the raw amino-acid sequence, 547 residues long: GMP synthase [glutamine-hydrolyzing] (547 aa).

One can recognise a Glutamine amidotransferase type-1 domain in the interval 12–210 (KVLILDFGSQ…VLEIAGAKPD (199 aa)). Residue C89 is the Nucleophile of the active site. Catalysis depends on residues H184 and E186. The GMPS ATP-PPase domain maps to 211 to 403 (WIMRDHIEEA…LGLPPEMVYR (193 aa)). 238–244 (SGGVDSS) is a binding site for ATP.

Homodimer.

The enzyme catalyses XMP + L-glutamine + ATP + H2O = GMP + L-glutamate + AMP + diphosphate + 2 H(+). Its pathway is purine metabolism; GMP biosynthesis; GMP from XMP (L-Gln route): step 1/1. Its function is as follows. Catalyzes the synthesis of GMP from XMP. The polypeptide is GMP synthase [glutamine-hydrolyzing] (Ralstonia nicotianae (strain ATCC BAA-1114 / GMI1000) (Ralstonia solanacearum)).